Here is a 161-residue protein sequence, read N- to C-terminus: uncharacterized protein (161 aa).

This sequence belongs to the SixA phosphatase family.

This is an uncharacterized protein from Mycobacterium leprae (strain TN).